A 165-amino-acid chain; its full sequence is uncharacterized protein (165 aa).

The interval 53–123 (CSEKTGSAPN…PAPSSGRQGG (71 aa)) is disordered. Low complexity predominate over residues 58-71 (GSAPNPGSSAPAPA).

This is an uncharacterized protein from Treponema pallidum (strain Nichols).